The chain runs to 64 residues: Large ribosomal subunit protein bL35 (64 aa).

The tract at residues 17 to 41 (TGSGKVKRERMNGSHNLEHKNRKRT) is disordered. The span at 25–35 (ERMNGSHNLEH) shows a compositional bias: basic and acidic residues.

Belongs to the bacterial ribosomal protein bL35 family.

The chain is Large ribosomal subunit protein bL35 from Chlorobaculum parvum (strain DSM 263 / NCIMB 8327) (Chlorobium vibrioforme subsp. thiosulfatophilum).